The sequence spans 643 residues: NADH-ubiquinone oxidoreductase chain 5 (643 aa).

A run of 16 helical transmembrane segments spans residues 7 to 27 (IIIL…VFFF), 64 to 84 (LLKT…IFNI), 114 to 134 (TFLS…YYYM), 140 to 160 (PNNF…LTST), 163 to 183 (IFLL…LISW), 208 to 228 (ILLF…PEIF), 230 to 250 (ISAP…AAAG), 277 to 297 (SSTM…LYAC), 301 to 321 (FNTW…TTAI), 338 to 358 (LGLM…FHIC), 398 to 418 (AACI…PGFY), 437 to 457 (IVLS…IIFF), 486 to 506 (ALGT…VPII), 511 to 531 (VLKT…ISIL), 555 to 575 (FYEN…SLSL), and 615 to 635 (YLLF…TTIS).

Belongs to the complex I subunit 5 family.

The protein localises to the mitochondrion inner membrane. It catalyses the reaction a ubiquinone + NADH + 5 H(+)(in) = a ubiquinol + NAD(+) + 4 H(+)(out). In terms of biological role, core subunit of the mitochondrial membrane respiratory chain NADH dehydrogenase (Complex I) that is believed to belong to the minimal assembly required for catalysis. Complex I functions in the transfer of electrons from NADH to the respiratory chain. The immediate electron acceptor for the enzyme is believed to be ubiquinone. This is NADH-ubiquinone oxidoreductase chain 5 (ND5) from Patiria pectinifera (Starfish).